Reading from the N-terminus, the 399-residue chain is Serine/threonine-protein kinase PKZ1 (399 aa).

The disordered stretch occupies residues Pro-30–Arg-50. The Protein kinase domain maps to Trp-92–Met-371. ATP is bound by residues Ile-98–Val-106 and Lys-121. Asp-219 functions as the Proton acceptor in the catalytic mechanism.

Belongs to the protein kinase superfamily. CAMK Ser/Thr protein kinase family. As to quaternary structure, interacts with BZP1.

The enzyme catalyses L-seryl-[protein] + ATP = O-phospho-L-seryl-[protein] + ADP + H(+). It catalyses the reaction L-threonyl-[protein] + ATP = O-phospho-L-threonyl-[protein] + ADP + H(+). In terms of biological role, may regulate an early stage of the zoospore pathway. This chain is Serine/threonine-protein kinase PKZ1, found in Phytophthora infestans (Potato late blight agent).